The following is a 480-amino-acid chain: 2-succinylbenzoate--CoA ligase (480 aa).

The protein belongs to the ATP-dependent AMP-binding enzyme family. MenE subfamily.

The enzyme catalyses 2-succinylbenzoate + ATP + CoA = 2-succinylbenzoyl-CoA + AMP + diphosphate. Its pathway is quinol/quinone metabolism; 1,4-dihydroxy-2-naphthoate biosynthesis; 1,4-dihydroxy-2-naphthoate from chorismate: step 5/7. It functions in the pathway quinol/quinone metabolism; menaquinone biosynthesis. Converts 2-succinylbenzoate (OSB) to 2-succinylbenzoyl-CoA (OSB-CoA). In Oceanobacillus iheyensis (strain DSM 14371 / CIP 107618 / JCM 11309 / KCTC 3954 / HTE831), this protein is 2-succinylbenzoate--CoA ligase.